The following is a 507-amino-acid chain: Tryptophan aminotransferase-related protein 2 (507 aa).

The segment at 91 to 135 (PPPHHHHHDAGLATRSSDAAVHRRARTASSMAPSTGKPAVTTDSV) is disordered. Residues tyrosine 169, 211–212 (ST), asparagine 282, 304–307 (DLAY), 327–330 (TVSK), and arginine 338 contribute to the pyridoxal 5'-phosphate site. Lysine 330 is modified (N6-(pyridoxal phosphate)lysine).

Belongs to the alliinase family. The cofactor is pyridoxal 5'-phosphate. In terms of tissue distribution, widely expressed.

The enzyme catalyses L-tryptophan + 2-oxoglutarate = indole-3-pyruvate + L-glutamate. It participates in plant hormone metabolism; auxin biosynthesis. In terms of biological role, probable tryptophan aminotransferase involved in auxin (IAA) biosynthesis. Required for auxin production to initiate multiple change in growth in response to environmental and developmental cues. Functions upstream of YUCCA1 in auxin biosynthesis. Required for polar auxin transport. The protein is Tryptophan aminotransferase-related protein 2 of Oryza sativa subsp. japonica (Rice).